The sequence spans 254 residues: MTREFIMLMMPPLTDGFPLDILVANVVACFLLGTVTALYARKIHSRDVHTIIGMGMMGGVSTFSSFAYGSVVLASASMSAFLIAAAYVTVSVVAGYVAVLAGMKFGEKSADILHRYPPMASIIDSGLVTVESRHSVAETIERVAAKAKSMGMNVFTRVDHGAGAKEAGLGLPPTELIIFGNPQNGTVLMQDKRTIGLDLPIRALAWEDGSGKVWLTVNDPAWLAQRHSLGLSSDVAIKAMVTGTGTVTKYAAGD.

3 helical membrane-spanning segments follow: residues 19-39, 51-71, and 80-100; these read LDILVANVVACFLLGTVTALY, IIGMGMMGGVSTFSSFAYGSV, and AFLIAAAYVTVSVVAGYVAVL. Na(+) contacts are provided by glycine 58 and serine 61.

Belongs to the fluoride channel Fluc/FEX (TC 1.A.43) family.

It is found in the cell inner membrane. The enzyme catalyses fluoride(in) = fluoride(out). Na(+) is not transported, but it plays an essential structural role and its presence is essential for fluoride channel function. In terms of biological role, fluoride-specific ion channel. Important for reducing fluoride concentration in the cell, thus reducing its toxicity. The protein is Fluoride-specific ion channel FluC 1 of Brucella suis biovar 1 (strain 1330).